The sequence spans 416 residues: Bifunctional protein GlmU (416 aa).

The interval M1 to R229 is pyrophosphorylase. Residues L8 to G11, K22, Q72, and G77 to T78 contribute to the UDP-N-acetyl-alpha-D-glucosamine site. D102 lines the Mg(2+) pocket. UDP-N-acetyl-alpha-D-glucosamine-binding residues include G139, E154, N169, and N227. N227 provides a ligand contact to Mg(2+). Residues V230–N250 are linker. Residues G251–R416 form an N-acetyltransferase region. The UDP-N-acetyl-alpha-D-glucosamine site is built by R332 and K350. H362 (proton acceptor) is an active-site residue. Positions 365 and 376 each coordinate UDP-N-acetyl-alpha-D-glucosamine. Acetyl-CoA is bound by residues A379 and N385–Y386.

In the N-terminal section; belongs to the N-acetylglucosamine-1-phosphate uridyltransferase family. This sequence in the C-terminal section; belongs to the transferase hexapeptide repeat family. As to quaternary structure, homotrimer. Requires Mg(2+) as cofactor.

Its subcellular location is the cytoplasm. The enzyme catalyses alpha-D-glucosamine 1-phosphate + acetyl-CoA = N-acetyl-alpha-D-glucosamine 1-phosphate + CoA + H(+). The catalysed reaction is N-acetyl-alpha-D-glucosamine 1-phosphate + UTP + H(+) = UDP-N-acetyl-alpha-D-glucosamine + diphosphate. The protein operates within nucleotide-sugar biosynthesis; UDP-N-acetyl-alpha-D-glucosamine biosynthesis; N-acetyl-alpha-D-glucosamine 1-phosphate from alpha-D-glucosamine 6-phosphate (route II): step 2/2. It functions in the pathway nucleotide-sugar biosynthesis; UDP-N-acetyl-alpha-D-glucosamine biosynthesis; UDP-N-acetyl-alpha-D-glucosamine from N-acetyl-alpha-D-glucosamine 1-phosphate: step 1/1. Its pathway is bacterial outer membrane biogenesis; LPS lipid A biosynthesis. Its function is as follows. Catalyzes the last two sequential reactions in the de novo biosynthetic pathway for UDP-N-acetylglucosamine (UDP-GlcNAc). The C-terminal domain catalyzes the transfer of acetyl group from acetyl coenzyme A to glucosamine-1-phosphate (GlcN-1-P) to produce N-acetylglucosamine-1-phosphate (GlcNAc-1-P), which is converted into UDP-GlcNAc by the transfer of uridine 5-monophosphate (from uridine 5-triphosphate), a reaction catalyzed by the N-terminal domain. This chain is Bifunctional protein GlmU, found in Streptococcus pyogenes serotype M12 (strain MGAS2096).